Reading from the N-terminus, the 1164-residue chain is Phospholipid-transporting ATPase IA (1164 aa).

At M1–L65 the chain is on the cytoplasmic side. A Phosphoserine modification is found at S25. T28 carries the post-translational modification Phosphothreonine. Residue S29 is modified to Phosphoserine. The chain crosses the membrane as a helical span at residues P66 to L86. Topologically, residues L87–D92 are exoplasmic loop. A helical transmembrane segment spans residues V93–K115. The Cytoplasmic portion of the chain corresponds to E116 to Q297. A helical transmembrane segment spans residues I298–W319. Over N320–F344 the chain is Exoplasmic loop. Residues L345–V366 traverse the membrane as a helical segment. Over K367–K857 the chain is Cytoplasmic. D409 acts as the 4-aspartylphosphate intermediate in catalysis. Residues D409, K410, and T411 each coordinate ATP. Residue D409 participates in Mg(2+) binding. T411 contacts Mg(2+). S443 carries the phosphoserine modification. ATP contacts are provided by residues E508, F549, K572, R605, T685, G686, D687, A741 to T748, R775, and K781. D801 serves as a coordination point for Mg(2+). ATP contacts are provided by N804 and D805. D805 contacts Mg(2+). The helical transmembrane segment at C858 to F878 threads the bilayer. The Exoplasmic loop portion of the chain corresponds to V879 to R890. The chain crosses the membrane as a helical span at residues W891 to I910. Over F911–V940 the chain is Cytoplasmic. Residues F941 to A962 traverse the membrane as a helical segment. The Exoplasmic loop portion of the chain corresponds to L963 to D976. Residues Y977–E999 form a helical membrane-spanning segment. Residues T1000–W1005 are Cytoplasmic-facing. Residues F1006 to S1026 traverse the membrane as a helical segment. Topologically, residues S1027–M1044 are exoplasmic loop. Residues L1045–K1070 traverse the membrane as a helical segment. At V1071 to W1164 the chain is on the cytoplasmic side. G1095–S1102 provides a ligand contact to ATP. Phosphoserine is present on S1126.

Belongs to the cation transport ATPase (P-type) (TC 3.A.3) family. Type IV subfamily. As to quaternary structure, component of a P4-ATPase flippase complex which consists of a catalytic alpha subunit and an accessory beta subunit. Interacts with TMEM30A to form a flippase complex; this complex forms an intermediate phosphoenzyme. Interacts with TMEM30B; this interaction is reported conflictingly. Mg(2+) serves as cofactor. Post-translationally, cleaved by calpain in a caspase- and calcium influx-dependent manner during platelet apoptosis leading to a 100 kDa polypeptide. As to expression, found in most adult tissues except liver, testis and placenta. Most abundant in heart, brain and skeletal muscle. Also detected in fetal tissues. Isoform 1 is only detected in brain, skeletal muscle and heart and is the most abundant form in skeletal muscle. Highly expressed in platelets.

It localises to the cytoplasmic vesicle. Its subcellular location is the secretory vesicle. The protein localises to the chromaffin granule membrane. It is found in the cytoplasmic granule. The protein resides in the cell membrane. It localises to the endoplasmic reticulum. Its subcellular location is the golgi apparatus. The catalysed reaction is ATP + H2O + phospholipidSide 1 = ADP + phosphate + phospholipidSide 2.. It carries out the reaction a 1,2-diacyl-sn-glycero-3-phospho-L-serine(out) + ATP + H2O = a 1,2-diacyl-sn-glycero-3-phospho-L-serine(in) + ADP + phosphate + H(+). ATPase activity is stimulated by phosphatidylserine (PS) and minimally by phosphatidylethanolamine (PE). ATPase activity is inhibited by beryllium fluoride and aluminum trifluoride. Its function is as follows. Catalytic component of a P4-ATPase flippase complex which catalyzes the hydrolysis of ATP coupled to the transport of aminophospholipids from the outer to the inner leaflet of various membranes and ensures the maintenance of asymmetric distribution of phospholipids. Phospholipid translocation also seems to be implicated in vesicle formation and in uptake of lipid signaling molecules. In vitro, its ATPase activity is selectively and stereospecifically stimulated by phosphatidylserine (PS). The flippase complex ATP8A1:TMEM30A seems to play a role in regulation of cell migration probably involving flippase-mediated translocation of phosphatidylethanolamine (PE) at the cell membrane. Acts as aminophospholipid translocase at the cell membrane in neuronal cells. The chain is Phospholipid-transporting ATPase IA from Homo sapiens (Human).